A 695-amino-acid chain; its full sequence is Elongation factor G (695 aa).

The 275-residue stretch at 9–283 folds into the tr-type G domain; it reads EKIRNIGIVA…AVIDYLPSPL (275 aa). GTP-binding positions include 18-25, 82-86, and 136-139; these read AHIDAGKT, DTPGH, and NKMD.

It belongs to the TRAFAC class translation factor GTPase superfamily. Classic translation factor GTPase family. EF-G/EF-2 subfamily.

Its subcellular location is the cytoplasm. In terms of biological role, catalyzes the GTP-dependent ribosomal translocation step during translation elongation. During this step, the ribosome changes from the pre-translocational (PRE) to the post-translocational (POST) state as the newly formed A-site-bound peptidyl-tRNA and P-site-bound deacylated tRNA move to the P and E sites, respectively. Catalyzes the coordinated movement of the two tRNA molecules, the mRNA and conformational changes in the ribosome. This is Elongation factor G from Petrotoga mobilis (strain DSM 10674 / SJ95).